The chain runs to 57 residues: uncharacterized protein (57 aa).

This is an uncharacterized protein from Homo sapiens (Human).